The primary structure comprises 322 residues: uncharacterized protein (322 aa).

Basic residues-rich tracts occupy residues 1–16 and 43–61; these read MPGN…KSGT and LRPH…RRPV. The tract at residues 1-69 is disordered; sequence MPGNSRRRGA…PVKRADETET (69 aa). Residues Gly-261, Ile-281, and Leu-290 each contribute to the S-adenosyl-L-methionine site.

The protein belongs to the class IV-like SAM-binding methyltransferase superfamily. RNA methyltransferase TrmH family.

This is an uncharacterized protein from Mycobacterium bovis (strain BCG / Pasteur 1173P2).